Consider the following 204-residue polypeptide: Large ribosomal subunit protein uL4 (204 aa).

The segment at 44–76 is disordered; that stretch reads RAGTHRTKGMGEISGTTKKPYRQKGTGSARQGS.

The protein belongs to the universal ribosomal protein uL4 family. As to quaternary structure, part of the 50S ribosomal subunit.

One of the primary rRNA binding proteins, this protein initially binds near the 5'-end of the 23S rRNA. It is important during the early stages of 50S assembly. It makes multiple contacts with different domains of the 23S rRNA in the assembled 50S subunit and ribosome. Its function is as follows. Forms part of the polypeptide exit tunnel. The polypeptide is Large ribosomal subunit protein uL4 (Gluconobacter oxydans (strain 621H) (Gluconobacter suboxydans)).